Consider the following 545-residue polypeptide: Phenylalanine--tRNA ligase beta subunit (545 aa).

The B5 domain maps to 268–343 (FLHKIQNVRE…MSIGYNNLEP (76 aa)). Mg(2+) contacts are provided by D321, D327, E330, and D331.

It belongs to the phenylalanyl-tRNA synthetase beta subunit family. Type 2 subfamily. As to quaternary structure, tetramer of two alpha and two beta subunits. Requires Mg(2+) as cofactor.

It is found in the cytoplasm. It catalyses the reaction tRNA(Phe) + L-phenylalanine + ATP = L-phenylalanyl-tRNA(Phe) + AMP + diphosphate + H(+). The chain is Phenylalanine--tRNA ligase beta subunit from Saccharolobus islandicus (strain M.16.27) (Sulfolobus islandicus).